Here is a 119-residue protein sequence, read N- to C-terminus: Large ribosomal subunit protein bL20 (119 aa).

This sequence belongs to the bacterial ribosomal protein bL20 family.

Functionally, binds directly to 23S ribosomal RNA and is necessary for the in vitro assembly process of the 50S ribosomal subunit. It is not involved in the protein synthesizing functions of that subunit. This Clostridium kluyveri (strain NBRC 12016) protein is Large ribosomal subunit protein bL20.